A 366-amino-acid polypeptide reads, in one-letter code: Protein U1 (366 aa).

Belongs to the herpesviridae US22 family.

The polypeptide is Protein U1 (U1) (Human herpesvirus 6A (strain Uganda-1102) (HHV-6 variant A)).